Here is a 241-residue protein sequence, read N- to C-terminus: Probable transcriptional regulatory protein RALTA_A0859 (241 aa).

The protein belongs to the TACO1 family.

It localises to the cytoplasm. The sequence is that of Probable transcriptional regulatory protein RALTA_A0859 from Cupriavidus taiwanensis (strain DSM 17343 / BCRC 17206 / CCUG 44338 / CIP 107171 / LMG 19424 / R1) (Ralstonia taiwanensis (strain LMG 19424)).